We begin with the raw amino-acid sequence, 430 residues long: Glutamate-1-semialdehyde 2,1-aminomutase (430 aa).

N6-(pyridoxal phosphate)lysine is present on Lys-267.

It belongs to the class-III pyridoxal-phosphate-dependent aminotransferase family. HemL subfamily. In terms of assembly, homodimer. Pyridoxal 5'-phosphate serves as cofactor.

It localises to the cytoplasm. It carries out the reaction (S)-4-amino-5-oxopentanoate = 5-aminolevulinate. Its pathway is porphyrin-containing compound metabolism; protoporphyrin-IX biosynthesis; 5-aminolevulinate from L-glutamyl-tRNA(Glu): step 2/2. The polypeptide is Glutamate-1-semialdehyde 2,1-aminomutase (Desulfotalea psychrophila (strain LSv54 / DSM 12343)).